We begin with the raw amino-acid sequence, 81 residues long: Centromere protein X (81 aa).

Position 1 is an N-acetylmethionine (methionine 1).

It belongs to the CENP-X/MHF2 family. In terms of assembly, heterodimer with CENPX, sometimes called MHF; this interaction stabilizes both partners. MHF heterodimers can assemble to form tetrameric structures. MHF also coassemble with CENPT-CENPW heterodimers at centromeres to form the tetrameric CENP-T-W-S-X complex. Forms a discrete complex with FANCM and CENPX, called FANCM-MHF; this interaction, probably mediated by direct binding between CENPS and FANCM, leads to synergistic activation of double-stranded DNA binding and strongly stimulates FANCM-mediated DNA remodeling. Recruited by FANCM to the Fanconi anemia (FA) core complex, which consists of CENPS, CENPX, FANCA, FANCB, FANCC, FANCE, FANCF, FANCG, FANCL, FANCM, FAAP24 and FAAP100. The FA core complex associates with Bloom syndrome (BLM) complex, which consists of at least BLM, DNA topoisomerase 3-alpha (TOP3A), RMI1/BLAP75, RPA1/RPA70 and RPA2/RPA32. The super complex between FA and BLM is called BRAFT.

It localises to the nucleus. It is found in the chromosome. Its subcellular location is the centromere. The protein localises to the kinetochore. Functionally, DNA-binding component of the Fanconi anemia (FA) core complex. Required for the normal activation of the FA pathway, leading to monoubiquitination of the FANCI-FANCD2 complex in response to DNA damage, cellular resistance to DNA cross-linking drugs, and prevention of chromosomal breakage. In complex with CENPS (MHF heterodimer), crucial cofactor for FANCM in both binding and ATP-dependent remodeling of DNA. Stabilizes FANCM. In complex with CENPS and FANCM (but not other FANC proteins), rapidly recruited to blocked forks and promotes gene conversion at blocked replication forks. In complex with CENPS, CENPT and CENPW (CENP-T-W-S-X heterotetramer), involved in the formation of a functional kinetochore outer plate, which is essential for kinetochore-microtubule attachment and faithful mitotic progression. As a component of MHF and CENP-T-W-S-X complexes, binds DNA and bends it to form a nucleosome-like structure. DNA-binding function is fulfilled in the presence of CENPS, with the following preference for DNA substates: Holliday junction &gt; double-stranded &gt; splay arm &gt; single-stranded. Does not bind DNA on its own. In Pongo abelii (Sumatran orangutan), this protein is Centromere protein X (CENPX).